We begin with the raw amino-acid sequence, 454 residues long: NADP-specific glutamate dehydrogenase (454 aa).

Position 2 is an N-acetylserine (S2). K114 is an active-site residue.

It belongs to the Glu/Leu/Phe/Val dehydrogenases family. In terms of assembly, homohexamer.

The enzyme catalyses L-glutamate + NADP(+) + H2O = 2-oxoglutarate + NH4(+) + NADPH + H(+). The sequence is that of NADP-specific glutamate dehydrogenase (gdh) from Neurospora crassa (strain ATCC 24698 / 74-OR23-1A / CBS 708.71 / DSM 1257 / FGSC 987).